Here is a 319-residue protein sequence, read N- to C-terminus: HPr kinase/phosphorylase (319 aa).

Active-site residues include His146 and Lys167. Position 161-168 (Gly161–Ser168) interacts with ATP. Mg(2+) is bound at residue Ser168. Asp185 (proton acceptor; for phosphorylation activity. Proton donor; for dephosphorylation activity) is an active-site residue. An important for the catalytic mechanism of both phosphorylation and dephosphorylation region spans residues Leu209–Asp218. Glu210 serves as a coordination point for Mg(2+). Residue Arg252 is part of the active site. An important for the catalytic mechanism of dephosphorylation region spans residues Gln273–Arg278.

It belongs to the HPrK/P family. Homohexamer. Mg(2+) is required as a cofactor.

The catalysed reaction is [HPr protein]-L-serine + ATP = [HPr protein]-O-phospho-L-serine + ADP + H(+). It carries out the reaction [HPr protein]-O-phospho-L-serine + phosphate + H(+) = [HPr protein]-L-serine + diphosphate. Its function is as follows. Catalyzes the ATP- as well as the pyrophosphate-dependent phosphorylation of a specific serine residue in HPr, a phosphocarrier protein of the phosphoenolpyruvate-dependent sugar phosphotransferase system (PTS). HprK/P also catalyzes the pyrophosphate-producing, inorganic phosphate-dependent dephosphorylation (phosphorolysis) of seryl-phosphorylated HPr (P-Ser-HPr). The chain is HPr kinase/phosphorylase from Variovorax paradoxus (strain S110).